We begin with the raw amino-acid sequence, 569 residues long: Protein ste7 (569 aa).

Disordered regions lie at residues 195–219 (APIT…VNSV) and 255–274 (FSVS…SPPI). Over residues 198–219 (TTSSATHTSQFSTSSSSSVNSV) the composition is skewed to low complexity. Positions 264–274 (PQTPISMSPPI) are enriched in pro residues.

The protein belongs to the arrestin family.

In terms of biological role, has a role in promoting meiosis whereby it is involved in establishing the mating pheromone signaling pathway. It also has a role in suppressing meiosis until the conjugation process is complete. In Schizosaccharomyces pombe (strain 972 / ATCC 24843) (Fission yeast), this protein is Protein ste7 (ste7).